A 582-amino-acid polypeptide reads, in one-letter code: Formate--tetrahydrofolate ligase (582 aa).

65–72 (TPLGEGKT) is a binding site for ATP.

It belongs to the formate--tetrahydrofolate ligase family.

It catalyses the reaction (6S)-5,6,7,8-tetrahydrofolate + formate + ATP = (6R)-10-formyltetrahydrofolate + ADP + phosphate. The protein operates within one-carbon metabolism; tetrahydrofolate interconversion. The polypeptide is Formate--tetrahydrofolate ligase (Vibrio vulnificus (strain CMCP6)).